The primary structure comprises 441 residues: Tubulin beta chain, nucleomorph (441 aa).

Glutamine 11, glutamate 69, serine 138, glycine 142, threonine 143, glycine 144, asparagine 204, and asparagine 226 together coordinate GTP. Glutamate 69 is a binding site for Mg(2+).

This sequence belongs to the tubulin family. Dimer of alpha and beta chains. A typical microtubule is a hollow water-filled tube with an outer diameter of 25 nm and an inner diameter of 15 nM. Alpha-beta heterodimers associate head-to-tail to form protofilaments running lengthwise along the microtubule wall with the beta-tubulin subunit facing the microtubule plus end conferring a structural polarity. Microtubules usually have 13 protofilaments but different protofilament numbers can be found in some organisms and specialized cells. It depends on Mg(2+) as a cofactor.

Its function is as follows. Tubulin is the major constituent of microtubules, a cylinder consisting of laterally associated linear protofilaments composed of alpha- and beta-tubulin heterodimers. Microtubules grow by the addition of GTP-tubulin dimers to the microtubule end, where a stabilizing cap forms. Below the cap, tubulin dimers are in GDP-bound state, owing to GTPase activity of alpha-tubulin. In Guillardia theta (Cryptophyte), this protein is Tubulin beta chain, nucleomorph (tubB).